Consider the following 97-residue polypeptide: Co-chaperonin GroES (97 aa).

It belongs to the GroES chaperonin family. Heptamer of 7 subunits arranged in a ring. Interacts with the chaperonin GroEL.

It is found in the cytoplasm. In terms of biological role, together with the chaperonin GroEL, plays an essential role in assisting protein folding. The GroEL-GroES system forms a nano-cage that allows encapsulation of the non-native substrate proteins and provides a physical environment optimized to promote and accelerate protein folding. GroES binds to the apical surface of the GroEL ring, thereby capping the opening of the GroEL channel. The polypeptide is Co-chaperonin GroES (Klebsiella aerogenes (Enterobacter aerogenes)).